The chain runs to 148 residues: Putative FAD-linked sulfhydryl oxidase 096R (148 aa).

Residues 1 to 103 form the ERV/ALR sulfhydryl oxidase domain; sequence MSIDPKLWGN…LAAKTVFQRY (103 aa). An intrachain disulfide couples Cys48 to Cys51. The chain crosses the membrane as a helical span at residues 122–142; sequence WSPWLTTALAVILVVVVAGIG.

Belongs to the IIV-6 347L family. FAD serves as cofactor.

The protein resides in the membrane. It carries out the reaction 2 R'C(R)SH + O2 = R'C(R)S-S(R)CR' + H2O2. Its function is as follows. FAD-dependent sulfhydryl oxidase that catalyzes disulfide bond formation. This Aedes vexans (Inland floodwater mosquito) protein is Putative FAD-linked sulfhydryl oxidase 096R.